Reading from the N-terminus, the 664-residue chain is NADH-ubiquinone oxidoreductase chain 5 (664 aa).

A run of 17 helical transmembrane segments spans residues 2–22 (LLLT…LFGF), 28–48 (GSVF…LIII), 77–97 (FLFD…STLV), 120–140 (LFTF…MFVG), 168–188 (AMLV…TIFY), 210–230 (FIFF…IFIG), 250–270 (GPTP…GVYL), 285–305 (LKII…VGLV), 321–341 (LGYM…FHLS), 342–362 (NHAY…HAMG), 376–396 (ILPF…GFPF), 424–444 (LGTI…FFAF), 462–482 (PLEM…IGYI), 521–541 (LPVI…FFKF), 590–610 (IDKG…FSFL), 614–634 (IILL…ISTI), and 639–659 (IIFF…FLFI).

Belongs to the complex I subunit 5 family.

Its subcellular location is the mitochondrion inner membrane. It catalyses the reaction a ubiquinone + NADH + 5 H(+)(in) = a ubiquinol + NAD(+) + 4 H(+)(out). Its function is as follows. Core subunit of the mitochondrial membrane respiratory chain NADH dehydrogenase (Complex I) that is believed to belong to the minimal assembly required for catalysis. Complex I functions in the transfer of electrons from NADH to the respiratory chain. The immediate electron acceptor for the enzyme is believed to be ubiquinone. The chain is NADH-ubiquinone oxidoreductase chain 5 (ND5) from Phytophthora infestans (Potato late blight agent).